The chain runs to 122 residues: Heat-labile enterotoxin IIB, B chain (122 aa).

The signal sequence occupies residues 1–23 (MSFKKIIKAFVIMAALVSVQAHA). Cysteine 33 and cysteine 104 are disulfide-bonded.

In terms of assembly, heterohexamer of one A chain and of five B chains.

The biological activity of the toxin is produced by the A chain, which activates intracellular adenyl cyclase. The protein is Heat-labile enterotoxin IIB, B chain of Escherichia coli.